We begin with the raw amino-acid sequence, 881 residues long: Valine--tRNA ligase (881 aa).

The 'HIGH' region motif lies at 49–59; sequence PNVTGKLHLGH. The 'KMSKS' region motif lies at 526–530; sequence KMSKS. ATP is bound at residue Lys529. Residues 810–881 adopt a coiled-coil conformation; it reads LADLINLDEE…VRQRLADLEK (72 aa).

The protein belongs to the class-I aminoacyl-tRNA synthetase family. ValS type 1 subfamily. Monomer.

It localises to the cytoplasm. The catalysed reaction is tRNA(Val) + L-valine + ATP = L-valyl-tRNA(Val) + AMP + diphosphate. In terms of biological role, catalyzes the attachment of valine to tRNA(Val). As ValRS can inadvertently accommodate and process structurally similar amino acids such as threonine, to avoid such errors, it has a 'posttransfer' editing activity that hydrolyzes mischarged Thr-tRNA(Val) in a tRNA-dependent manner. This chain is Valine--tRNA ligase, found in Bacillus cereus (strain ATCC 14579 / DSM 31 / CCUG 7414 / JCM 2152 / NBRC 15305 / NCIMB 9373 / NCTC 2599 / NRRL B-3711).